A 256-amino-acid chain; its full sequence is Global transcriptional regulator CodY (256 aa).

The segment at 1–155 (MSLLSKTREL…AATVIGMEIL (155 aa)) is GAF domain. The H-T-H motif DNA-binding region spans 203 to 222 (ASKVADRVGITRSVIVNALR).

The protein belongs to the CodY family.

It localises to the cytoplasm. DNA-binding global transcriptional regulator which is involved in the adaptive response to starvation and acts by directly or indirectly controlling the expression of numerous genes in response to nutrient availability. During rapid exponential growth, CodY is highly active and represses genes whose products allow adaptation to nutrient depletion. This Staphylococcus epidermidis (strain ATCC 35984 / DSM 28319 / BCRC 17069 / CCUG 31568 / BM 3577 / RP62A) protein is Global transcriptional regulator CodY.